We begin with the raw amino-acid sequence, 449 residues long: Glucose-6-phosphate isomerase (449 aa).

Glutamate 291 acts as the Proton donor in catalysis. Residues histidine 312 and lysine 426 contribute to the active site.

Belongs to the GPI family.

It localises to the cytoplasm. The enzyme catalyses alpha-D-glucose 6-phosphate = beta-D-fructose 6-phosphate. It participates in carbohydrate biosynthesis; gluconeogenesis. The protein operates within carbohydrate degradation; glycolysis; D-glyceraldehyde 3-phosphate and glycerone phosphate from D-glucose: step 2/4. Functionally, catalyzes the reversible isomerization of glucose-6-phosphate to fructose-6-phosphate. The protein is Glucose-6-phosphate isomerase of Streptococcus pyogenes serotype M4 (strain MGAS10750).